Here is a 68-residue protein sequence, read N- to C-terminus: Neuronal regeneration-related protein (68 aa).

In Gallus gallus (Chicken), this protein is Neuronal regeneration-related protein (NREP).